The chain runs to 303 residues: Cobalamin biosynthesis protein CobD (303 aa).

Transmembrane regions (helical) follow at residues 65–85, 147–167, 235–255, and 283–303; these read LLAWLLSLLPGIGWLAEIVLL, DAVFAALFWFIVAGAPGVVLY, AGPVMAAGAGALGVVLGGAAI, and LVWAGVGVWLLVLLFGGWLYA.

It belongs to the CobD/CbiB family.

The protein resides in the cell membrane. It participates in cofactor biosynthesis; adenosylcobalamin biosynthesis. In terms of biological role, converts cobyric acid to cobinamide by the addition of aminopropanol on the F carboxylic group. In Stutzerimonas stutzeri (strain A1501) (Pseudomonas stutzeri), this protein is Cobalamin biosynthesis protein CobD.